The primary structure comprises 132 residues: MSRKRTSPNRNVQIADQIQRDLSELIMREVKDPRIGIVTIQSVELTPDYAHAKVYFTALTGDPAKTQEALNHASGHLHNLLFKRLHIHTVPTLHFHYDQTIEKAVEMSRLIKEANSTRAKDDDEADAAAKDD.

The protein belongs to the RbfA family. As to quaternary structure, monomer. Binds 30S ribosomal subunits, but not 50S ribosomal subunits or 70S ribosomes.

It is found in the cytoplasm. One of several proteins that assist in the late maturation steps of the functional core of the 30S ribosomal subunit. Associates with free 30S ribosomal subunits (but not with 30S subunits that are part of 70S ribosomes or polysomes). Required for efficient processing of 16S rRNA. May interact with the 5'-terminal helix region of 16S rRNA. The sequence is that of Ribosome-binding factor A from Burkholderia lata (strain ATCC 17760 / DSM 23089 / LMG 22485 / NCIMB 9086 / R18194 / 383).